We begin with the raw amino-acid sequence, 408 residues long: MSDRGSDQSSSSSDSAQHIPPKAQTILTDQRSLRTCILLQHLQGKDPMEGYNLLCKSLGPKFMEYSHFNYWFMGLADETLTLDSADRFNASQVKQCIDLPDNHPAMASKTVLQTNRFSTVGDAHRSQSNIREGRNVKGIFLSFENSELAFDDDISFDNEQDDDGCIVEVEYKDDKKKTISKKKWSLKFAMKDLSAHLNGKKLVLDDFVVIMGGWRIAQDQEKWFEALQSILHSNGTVSAKCVSFVSFMTSYQTAQFLKHFESGFLERISIDADDASVEKIVCLEQYKQATSLSLGSGMFSEFFKHIDHFKSLKFCFFGKRLSKNHIELFRDNVIAKSVNLESCTFEHLDFSEKSFLTAFNAPKSATGSFVYKANKRSFTITSEGFAYHIKKNSSNLSTIKNSFPSDFF.

Residues 1–22 (MSDRGSDQSSSSSDSAQHIPPK) form a disordered region.

Belongs to the FTH family.

The protein is F-box A protein 155 (fbxa-155) of Caenorhabditis elegans.